Reading from the N-terminus, the 228-residue chain is 7-cyano-7-deazaguanine synthase (228 aa).

9–19 (LSGGPDSTTVL) contributes to the ATP binding site. 4 residues coordinate Zn(2+): Cys-193, Cys-203, Cys-206, and Cys-209.

The protein belongs to the QueC family. The cofactor is Zn(2+).

The catalysed reaction is 7-carboxy-7-deazaguanine + NH4(+) + ATP = 7-cyano-7-deazaguanine + ADP + phosphate + H2O + H(+). The protein operates within purine metabolism; 7-cyano-7-deazaguanine biosynthesis. Its function is as follows. Catalyzes the ATP-dependent conversion of 7-carboxy-7-deazaguanine (CDG) to 7-cyano-7-deazaguanine (preQ(0)). The sequence is that of 7-cyano-7-deazaguanine synthase from Rickettsia peacockii (strain Rustic).